A 1821-amino-acid chain; its full sequence is Latent-transforming growth factor beta-binding protein 2 (1821 aa).

An N-terminal signal peptide occupies residues 1–35 (MRPRTKARSPGRALRNPWRGFLPLTLALFVGAGHA). Disordered regions lie at residues 38–58 (DPVGRYEPAGGDANRLRRPGG) and 81–165 (GLQP…RLTG). The segment at 94–115 (SPRRPTEAEARRPSRAQQSRRV) is heparin-binding. Composition is skewed to low complexity over residues 108-120 (RAQQSRRVQPPAQ) and 129-145 (QQQPAPRTRAAPALPRL). N-linked (GlcNAc...) asparagine glycosylation occurs at Asn-181. Residues 187-219 (IKPVCEPPCQNRGSCSRPQLCVCRSGFRGARCE) form the EGF-like 1 domain. 3 disulfides stabilise this stretch: Cys-191–Cys-201, Cys-195–Cys-207, and Cys-209–Cys-218. Residues 229–339 (PQNSRLAPRR…AVPLEHPSSP (111 aa)) are disordered. Residues 232-249 (SRLAPRRWAERSPNLRRS) form a heparin-binding region. Positions 262–274 (PPAPQSPPAPQSP) are enriched in pro residues. Composition is skewed to polar residues over residues 280-292 (SGLSQTHPSQQHV) and 304-314 (ATASSQLSSNA). N-linked (GlcNAc...) asparagine glycosylation is present at Asn-343. 344-354 (LTEKIKKIKIV) serves as a coordination point for heparin. The Cell attachment site signature appears at 375-377 (RGD). Positions 396 to 428 (RIYFCQIPCLNGGRCIGRDECWCPANSTGKFCH) constitute an EGF-like 2 domain. 3 disulfides stabilise this stretch: Cys-400–Cys-410, Cys-404–Cys-416, and Cys-418–Cys-427. A glycan (N-linked (GlcNAc...) asparagine) is linked at Asn-421. Ser-506 is subject to Phosphoserine. A disordered region spans residues 510–544 (RPPPWLPASPGHSLWDSNNIPARSGEPPRPLPPAA). In terms of domain architecture, TB 1 spans 552–604 (GRCYLNTVNGQCANPLLELTTQEDCCGSVGAFWGVTLCAPCPPRPASPVIENG). 3 disulfides stabilise this stretch: Cys-554–Cys-576, Cys-563–Cys-589, and Cys-577–Cys-592. The N-linked (GlcNAc...) asparagine glycan is linked to Asn-616. The 41-residue stretch at 622–662 (DINECLTLGLCKDAECVNTRGSYLCTCRPGLMLDPSRSRCV) folds into the EGF-like 3; calcium-binding domain. 7 disulfide bridges follow: Cys-626–Cys-637, Cys-632–Cys-646, Cys-648–Cys-661, Cys-674–Cys-696, Cys-683–Cys-709, Cys-697–Cys-712, and Cys-698–Cys-724. Positions 672 to 724 (GLCYRSLGPGTCTLPLAQRITKQICCCSRVGKAWGSECEKCPLPGTEAFREIC) constitute a TB 2 domain. A compositionally biased stretch (basic and acidic residues) spans 744 to 757 (AEEEELARPPREQG). The tract at residues 744 to 772 (AEEEELARPPREQGQRSSGALPGPAERQP) is disordered. Asn-811 carries an N-linked (GlcNAc...) asparagine glycan. Positions 844–886 (GIDRCAAGATNVCGPGTCVNLPDGYRCVCSPGYQLHPSQAYCT) constitute an EGF-like 4 domain. Disulfide bonds link Cys-848–Cys-861, Cys-856–Cys-870, Cys-872–Cys-885, Cys-891–Cys-902, Cys-896–Cys-911, Cys-913–Cys-928, Cys-934–Cys-945, Cys-940–Cys-954, Cys-956–Cys-968, Cys-974–Cys-985, Cys-980–Cys-994, Cys-997–Cys-1008, Cys-1014–Cys-1025, Cys-1020–Cys-1034, Cys-1036–Cys-1049, Cys-1055–Cys-1066, Cys-1061–Cys-1075, Cys-1078–Cys-1091, Cys-1097–Cys-1108, Cys-1103–Cys-1117, Cys-1120–Cys-1133, Cys-1139–Cys-1151, Cys-1146–Cys-1160, Cys-1162–Cys-1174, Cys-1180–Cys-1192, Cys-1186–Cys-1201, Cys-1203–Cys-1216, Cys-1222–Cys-1233, Cys-1228–Cys-1242, Cys-1244–Cys-1257, Cys-1263–Cys-1276, Cys-1271–Cys-1285, Cys-1289–Cys-1301, Cys-1307–Cys-1319, Cys-1313–Cys-1328, Cys-1330–Cys-1343, Cys-1349–Cys-1361, Cys-1356–Cys-1370, Cys-1372–Cys-1386, Cys-1413–Cys-1436, Cys-1423–Cys-1448, Cys-1437–Cys-1451, Cys-1438–Cys-1463, Cys-1489–Cys-1502, Cys-1497–Cys-1511, Cys-1513–Cys-1526, Cys-1532–Cys-1542, Cys-1537–Cys-1551, and Cys-1553–Cys-1566. Residues 887–929 (DDNECLRDPCKGKGRCINRVGSYSCFCYPGYTLATSGATQECQ) enclose the EGF-like 5; calcium-binding domain. The EGF-like 6; calcium-binding domain maps to 930–969 (DINECEQPGVCSGGQCTNTEGSYHCECDQGYIMVRKGHCQ). The EGF-like 7; calcium-binding domain occupies 970–1009 (DINECRHPGTCPDGRCVNSPGSYTCLACEEGYRGQSGSCV). Residues 1010 to 1050 (DVNECLTPGVCAHGKCTNLEGSFRCSCEQGYEVTSDEKGCQ) enclose the EGF-like 8; calcium-binding domain. The region spanning 1051–1092 (DVDECASRASCPTGLCLNTEGSFACSACENGYWVNEDGTACE) is the EGF-like 9; calcium-binding domain. The 42-residue stretch at 1093 to 1134 (DLDECAFPGVCPSGVCTNTAGSFSCKDCDGGYRPSPLGDSCE) folds into the EGF-like 10; calcium-binding domain. In terms of domain architecture, EGF-like 11; calcium-binding spans 1135-1175 (DVDECEDPQSSCLGGECKNTVGSYQCLCPQGFQLANGTVCE). The N-linked (GlcNAc...) asparagine glycan is linked to Asn-1170. The 42-residue stretch at 1176–1217 (DVNECMGEEHCAPHGECLNSHGSFFCLCAPGFVSAEGGTSCQ) folds into the EGF-like 12; calcium-binding domain. The region spanning 1218 to 1258 (DVDECATTDPCVGGHCVNTEGSFNCLCETGFQPSPESGECV) is the EGF-like 13; calcium-binding domain. An EGF-like 14; calcium-binding domain is found at 1259-1302 (DIDECEDYGDPVCGTWKCENSPGSYRCVLGCQPGFHMAPNGDCI). The EGF-like 15; calcium-binding domain maps to 1303 to 1344 (DIDECANDTMCGSHGFCDNTDGSFRCLCDQGFEISPSGWDCV). The N-linked (GlcNAc...) asparagine glycan is linked to Asn-1309. Residues 1345-1387 (DVNECELMLAVCGAALCENVEGSFLCLCASDLEEYDAQEGHCR) enclose the EGF-like 16; calcium-binding domain. Residues 1411 to 1463 (MDCYSGQKGHAPCSSVLGRNTTQAECCCTQGASWGDACDLCPSEDSAEFSEIC) enclose the TB 3 domain. An N-linked (GlcNAc...) asparagine glycan is attached at Asn-1430. Residues 1485–1527 (DADECVIFGPGLCPNGRCLNTVPGYVCLCNPGFHYDASHKKCE) enclose the EGF-like 17; calcium-binding domain. Residues 1528 to 1567 (DHDECQDLACENGECVNTEGSFHCFCSPPLTLDLSQQRCM) enclose the EGF-like 18; calcium-binding domain. Asn-1568 carries an N-linked (GlcNAc...) asparagine glycan. The region spanning 1584-1636 (DICWKKVTNDVCSEPLRGHRTTYTECCCQDGEAWSQQCALCPPRSSEVYAQLC) is the TB 4 domain. Disulfide bonds link Cys-1586–Cys-1609, Cys-1595–Cys-1621, Cys-1610–Cys-1624, Cys-1611–Cys-1636, Cys-1737–Cys-1748, Cys-1743–Cys-1757, Cys-1759–Cys-1772, Cys-1778–Cys-1793, Cys-1788–Cys-1802, and Cys-1804–Cys-1817. Residues 1639–1821 (ARIEAEREAG…AGPPHCTAKE (183 aa)) are C-terminal domain. Positions 1733 to 1773 (QAEECGILNGCENGRCVRVREGYTCDCFEGFQLDAAHMACV) constitute an EGF-like 19; calcium-binding domain. The EGF-like 20; calcium-binding domain maps to 1774–1818 (DVNECDDLNGPAVLCVHGYCENTEGSYRCHCSPGYVAEAGPPHCT).

The protein belongs to the LTBP family. In terms of assembly, forms part of the large latent transforming growth factor beta precursor complex; removal is essential for activation of complex. Interacts with SDC4. Interacts (via C-terminal domain) with FBN1 (via N-terminal domain) in a Ca(+2)-dependent manner. Post-translationally, N-Glycosylated. In terms of processing, contains hydroxylated asparagine residues. As to expression, expressed in the aorta (at protein level). Expressed in lung, weakly expressed in heart, placenta, liver and skeletal muscle.

Its subcellular location is the secreted. It is found in the extracellular space. It localises to the extracellular matrix. In terms of biological role, may play an integral structural role in elastic-fiber architectural organization and/or assembly. This is Latent-transforming growth factor beta-binding protein 2 (LTBP2) from Homo sapiens (Human).